The following is a 103-amino-acid chain: Co-chaperonin GroES (103 aa).

The protein belongs to the GroES chaperonin family. As to quaternary structure, heptamer of 7 subunits arranged in a ring. Interacts with the chaperonin GroEL.

The protein localises to the cytoplasm. Together with the chaperonin GroEL, plays an essential role in assisting protein folding. The GroEL-GroES system forms a nano-cage that allows encapsulation of the non-native substrate proteins and provides a physical environment optimized to promote and accelerate protein folding. GroES binds to the apical surface of the GroEL ring, thereby capping the opening of the GroEL channel. The chain is Co-chaperonin GroES from Nostoc punctiforme (strain ATCC 29133 / PCC 73102).